Here is a 116-residue protein sequence, read N- to C-terminus: Aspartate 1-decarboxylase (116 aa).

Residue Ser25 is the Schiff-base intermediate with substrate; via pyruvic acid of the active site. The residue at position 25 (Ser25) is a Pyruvic acid (Ser). Residue Thr57 participates in substrate binding. Residue Tyr58 is the Proton donor of the active site. 73–75 (GAA) contributes to the substrate binding site.

The protein belongs to the PanD family. In terms of assembly, heterooctamer of four alpha and four beta subunits. Pyruvate serves as cofactor. Post-translationally, is synthesized initially as an inactive proenzyme, which is activated by self-cleavage at a specific serine bond to produce a beta-subunit with a hydroxyl group at its C-terminus and an alpha-subunit with a pyruvoyl group at its N-terminus.

The protein resides in the cytoplasm. It catalyses the reaction L-aspartate + H(+) = beta-alanine + CO2. Its pathway is cofactor biosynthesis; (R)-pantothenate biosynthesis; beta-alanine from L-aspartate: step 1/1. In terms of biological role, catalyzes the pyruvoyl-dependent decarboxylation of aspartate to produce beta-alanine. This Leptospira borgpetersenii serovar Hardjo-bovis (strain JB197) protein is Aspartate 1-decarboxylase.